Consider the following 199-residue polypeptide: N-(5'-phosphoribosyl)anthranilate isomerase (199 aa).

This sequence belongs to the TrpF family.

The enzyme catalyses N-(5-phospho-beta-D-ribosyl)anthranilate = 1-(2-carboxyphenylamino)-1-deoxy-D-ribulose 5-phosphate. The protein operates within amino-acid biosynthesis; L-tryptophan biosynthesis; L-tryptophan from chorismate: step 3/5. The protein is N-(5'-phosphoribosyl)anthranilate isomerase of Campylobacter jejuni subsp. jejuni serotype O:2 (strain ATCC 700819 / NCTC 11168).